We begin with the raw amino-acid sequence, 97 residues long: F-actin-capping protein subunit beta (97 aa).

Disordered regions lie at residues 1–27 (RLPP…AMPS) and 43–66 (KSGS…ETVS). Residues 43 to 57 (KSGSGTMNLGGSLTR) are compositionally biased toward polar residues. Lysine 97 bears the N6-acetyllysine mark.

This sequence belongs to the F-actin-capping protein beta subunit family. Component of the F-actin capping complex, composed of a heterodimer of an alpha and a beta subunit. Subunit of dynactin, a multiprotein complex part of a tripartite complex with dynein and a adapter, such as BICDL1, BICD2 or HOOK3. The dynactin complex is built around ACTR1A/ACTB filament and consists of an actin-related filament composed of a shoulder domain, a pointed end and a barbed end. Its length is defined by its flexible shoulder domain. The soulder is composed of 2 DCTN1 subunits, 4 DCTN2 and 2 DCTN3. The 4 DCNT2 (via N-terminus) bind the ACTR1A filament and act as molecular rulers to determine the length. The pointed end is important for binding dynein-dynactin cargo adapters. Consists of 4 subunits: ACTR10, DCNT4, DCTN5 and DCTN6. The barbed end is composed of a CAPZA1:CAPZB heterodimers, which binds ACTR1A/ACTB filament and dynactin and stabilizes dynactin. Interacts with ARHGAP17. Interaction with RCSD1/CAPZIP. Component of the WASH complex, composed of F-actin-capping protein subunit alpha (CAPZA1, CAPZA2 or CAPZA3), F-actin-capping protein subunit beta (CAPZB), WASH (WASHC1, WASH2P, WASH3P, WASH4P, WASH5P or WASH6P), WASHC2 (WASHC2A or WASHC2C), WASHC3, WASHC4 and WASHC5. Interacts with ACTG1. Directly interacts with CRACD; this interaction decreases binding to actin.

It localises to the cytoplasm. The protein localises to the cytoskeleton. The protein resides in the myofibril. It is found in the sarcomere. Its function is as follows. F-actin-capping proteins bind in a Ca(2+)-independent manner to the fast growing ends of actin filaments (barbed end) thereby blocking the exchange of subunits at these ends. Unlike other capping proteins (such as gelsolin and severin), these proteins do not sever actin filaments. Plays a role in the regulation of cell morphology and cytoskeletal organization. Forms, with CAPZB, the barbed end of the fast growing ends of actin filaments in the dynactin complex and stabilizes dynactin structure. The dynactin multiprotein complex activates the molecular motor dynein for ultra-processive transport along microtubules. The protein is F-actin-capping protein subunit beta of Mesocricetus auratus (Golden hamster).